The primary structure comprises 622 residues: Low affinity potassium transport system protein Kup (622 aa).

A run of 12 helical transmembrane segments spans residues leucine 9–leucine 29, valine 49–leucine 69, valine 101–proline 121, proline 137–isoleucine 157, valine 165–valine 185, alanine 212–tyrosine 232, tryptophan 247–leucine 267, proline 276–alanine 296, isoleucine 337–phenylalanine 357, leucine 363–cysteine 383, alanine 397–valine 417, and isoleucine 419–threonine 439.

It belongs to the HAK/KUP transporter (TC 2.A.72) family.

The protein localises to the cell inner membrane. The catalysed reaction is K(+)(in) + H(+)(in) = K(+)(out) + H(+)(out). Its function is as follows. Responsible for the low-affinity transport of potassium into the cell. Likely operates as a K(+):H(+) symporter. The protein is Low affinity potassium transport system protein Kup of Pectobacterium atrosepticum (strain SCRI 1043 / ATCC BAA-672) (Erwinia carotovora subsp. atroseptica).